Consider the following 156-residue polypeptide: Ribonuclease pancreatic (156 aa).

A signal peptide spans 1-28 (MALEKSLVLLPLLVLALLVLGWIQPSLG). Residues Lys35 and Arg38 each contribute to the substrate site. Residue His40 is the Proton acceptor of the active site. 4 disulfide bridges follow: Cys54–Cys112, Cys68–Cys123, Cys86–Cys138, and Cys93–Cys100. An N-linked (GlcNAc...) asparagine glycan is attached at Asn62. 69-73 (KPVNT) serves as a coordination point for substrate. An N-linked (GlcNAc...) asparagine glycan is attached at Asn90. Substrate is bound at residue Lys94. N-linked (GlcNAc...) asparagine glycosylation occurs at Asn104. Substrate is bound at residue Arg113. His147 (proton donor) is an active-site residue.

This sequence belongs to the pancreatic ribonuclease family. Monomer. Interacts with and forms tight 1:1 complexes with RNH1. Dimerization of two such complexes may occur. Interaction with RNH1 inhibits this protein.

Its subcellular location is the secreted. The enzyme catalyses an [RNA] containing cytidine + H2O = an [RNA]-3'-cytidine-3'-phosphate + a 5'-hydroxy-ribonucleotide-3'-[RNA].. It carries out the reaction an [RNA] containing uridine + H2O = an [RNA]-3'-uridine-3'-phosphate + a 5'-hydroxy-ribonucleotide-3'-[RNA].. Endonuclease that catalyzes the cleavage of RNA on the 3' side of pyrimidine nucleotides. Acts on single-stranded and double-stranded RNA. This Lemur catta (Ring-tailed lemur) protein is Ribonuclease pancreatic (RNASE1).